The following is a 234-amino-acid chain: Large ribosomal subunit protein uL1 (234 aa).

It belongs to the universal ribosomal protein uL1 family. In terms of assembly, part of the 50S ribosomal subunit.

Functionally, binds directly to 23S rRNA. The L1 stalk is quite mobile in the ribosome, and is involved in E site tRNA release. In terms of biological role, protein L1 is also a translational repressor protein, it controls the translation of the L11 operon by binding to its mRNA. This Geobacter metallireducens (strain ATCC 53774 / DSM 7210 / GS-15) protein is Large ribosomal subunit protein uL1.